The primary structure comprises 492 residues: Glutamyl-tRNA(Gln) amidotransferase subunit A (492 aa).

Catalysis depends on charge relay system residues lysine 78 and serine 158. Residue serine 182 is the Acyl-ester intermediate of the active site.

This sequence belongs to the amidase family. GatA subfamily. Heterotrimer of A, B and C subunits.

The catalysed reaction is L-glutamyl-tRNA(Gln) + L-glutamine + ATP + H2O = L-glutaminyl-tRNA(Gln) + L-glutamate + ADP + phosphate + H(+). Its function is as follows. Allows the formation of correctly charged Gln-tRNA(Gln) through the transamidation of misacylated Glu-tRNA(Gln) in organisms which lack glutaminyl-tRNA synthetase. The reaction takes place in the presence of glutamine and ATP through an activated gamma-phospho-Glu-tRNA(Gln). The sequence is that of Glutamyl-tRNA(Gln) amidotransferase subunit A from Orientia tsutsugamushi (strain Ikeda) (Rickettsia tsutsugamushi).